An 830-amino-acid polypeptide reads, in one-letter code: Frameshifted structural polyprotein (830 aa).

Residues 58–109 (AIAPARPPKPKKKKTTKPKPKTQPKKINGKTQQQKKKDKQADKKKKKPGKRE) are disordered. Over residues 65–107 (PKPKKKKTTKPKPKTQPKKINGKTQQQKKKDKQADKKKKKPGK) the composition is skewed to basic residues. The tract at residues 94–106 (KDKQADKKKKKPG) is ribosome-binding. Residues C119 and C134 are joined by a disulfide bond. The 149-residue stretch at 119–267 (CIFEVKHEGK…RVTPEGSEEW (149 aa)) folds into the Peptidase S3 domain. Active-site charge relay system residues include H145, D167, and S219. 4 N-linked (GlcNAc...) asparagine; by host glycosylation sites follow: N280, N327, N533, and N595. Residues 702 to 722 (AVVGMSLLALISIFASCYMLV) traverse the membrane as a helical segment. 4 S-palmitoyl cysteine; by host lipidation sites follow: C718, C728, C748, and C749. The interval 728–748 (CLTPYALTPGAAVPWTLGILC) is transient transmembrane before p62-6K protein processing. A run of 2 helical transmembrane segments spans residues 771–791 (ALFWLEFAAPVACILIITYCL) and 793–813 (NVLCCCKSLSFLSATEPRGHR).

In terms of assembly, homodimer. Homomultimer. Interacts with host karyopherin KPNA4; this interaction allows the nuclear import of the viral capsid protein. Precursor of protein E3/E2: The precursor of protein E3/E2 and E1 form a heterodimer shortly after synthesis. Interacts with host IRAK1; the interaction leads to inhibition of IRAK1-dependent signaling. As to quaternary structure, processing of the precursor of protein E3/E2 into E2 and E3 results in a heterodimer of the spike glycoproteins E2 and E1. Spike at virion surface are constituted of three E2-E1 heterodimers. Interacts with 6K protein. Interacts with host MXRA8; this interaction mediates virus entry. Specific enzymatic cleavages in vivo yield mature proteins. Capsid protein is auto-cleaved during polyprotein translation, unmasking a signal peptide at the N-terminus of the precursor of E3/E2. The remaining polyprotein is then targeted to the host endoplasmic reticulum, where host signal peptidase cleaves it into pE2 and TF. pE2 is further processed to mature E3 and E2 by host furin in trans-Golgi vesicle.

It localises to the virion. The protein resides in the host cytoplasm. The protein localises to the host cell membrane. It is found in the host nucleus. Its subcellular location is the virion membrane. It carries out the reaction Autocatalytic release of the core protein from the N-terminus of the togavirus structural polyprotein by hydrolysis of a -Trp-|-Ser- bond.. Functionally, forms an icosahedral capsid with a T=4 symmetry composed of 240 copies of the capsid protein surrounded by a lipid membrane through which penetrate 80 spikes composed of trimers of E1-E2 heterodimers. The capsid protein binds to the viral RNA genome at a site adjacent to a ribosome binding site for viral genome translation following genome release. Possesses a protease activity that results in its autocatalytic cleavage from the nascent structural protein. Following its self-cleavage, the capsid protein transiently associates with ribosomes, and within several minutes the protein binds to viral RNA and rapidly assembles into icosahedric core particles. The resulting nucleocapsid eventually associates with the cytoplasmic domain of the spike glycoprotein E2 at the cell membrane, leading to budding and formation of mature virions. In case of infection, new virions attach to target cells and after clathrin-mediated endocytosis their membrane fuses with the host endosomal membrane. This leads to the release of the nucleocapsid into the cytoplasm, followed by an uncoating event necessary for the genomic RNA to become accessible. The uncoating might be triggered by the interaction of capsid proteins with ribosomes. Binding of ribosomes would release the genomic RNA since the same region is genomic RNA-binding and ribosome-binding. Specifically inhibits interleukin-1 receptor-associated kinase 1/IRAK1-dependent signaling during viral entry, representing a means by which the alphaviruses may evade innate immune detection and activation prior to viral gene expression. Its function is as follows. Provides the signal sequence for p62 (E3/E2) translocation to the host endoplasmic reticulum. Mediates pH protection of E1 during secretory pathway trans- port. Plays a role in viral attachment to target host cell, by binding to the cell receptor. Synthesized as a p62 precursor which is processed by furin at the cell membrane just before virion budding, giving rise to E2-E1 heterodimer. The p62-E1 heterodimer is stable, whereas E2-E1 is unstable and dissociate at low pH. p62 is processed at the last step, presumably to avoid E1 fusion activation before its final export to cell surface. E2 C-terminus contains a transitory transmembrane that would be disrupted by palmitoylation, resulting in reorientation of the C-terminal tail from lumenal to cytoplasmic side. This step is critical since E2 C-terminus is involved in budding by interacting with capsid proteins. This release of E2 C-terminus in cytoplasm occurs lately in protein export, and precludes premature assembly of particles at the endoplasmic reticulum membrane. In terms of biological role, virion component that may play a role during viral assembly. This chain is Frameshifted structural polyprotein, found in Aedes (Middle-African hedgehog).